The sequence spans 125 residues: Fatty acid-binding protein, liver-type (125 aa).

This sequence belongs to the calycin superfamily. Fatty-acid binding protein (FABP) family.

Its subcellular location is the cytoplasm. This Takifugu rubripes (Japanese pufferfish) protein is Fatty acid-binding protein, liver-type (fabp1).